The chain runs to 57 residues: UPF0391 membrane protein RPC_2356 (57 aa).

2 helical membrane passes run 6-26 (WALI…TGIS) and 35-55 (ILFY…LTIF).

It belongs to the UPF0391 family.

The protein localises to the cell membrane. The protein is UPF0391 membrane protein RPC_2356 of Rhodopseudomonas palustris (strain BisB18).